The primary structure comprises 723 residues: UPF0313 protein YgiQ (723 aa).

Positions 372-650 (AYEMIRFSIN…KALLRYHDPA (279 aa)) constitute a Radical SAM core domain. Positions 386, 390, and 393 each coordinate [4Fe-4S] cluster. The segment at 686–723 (EARRQNRNTRPALTKHTPVEHQRQGLAANKKRGKGAGR) is disordered. A compositionally biased stretch (basic residues) spans 714 to 723 (NKKRGKGAGR).

This sequence belongs to the UPF0313 family. The cofactor is [4Fe-4S] cluster.

This is UPF0313 protein YgiQ from Salmonella typhimurium (strain LT2 / SGSC1412 / ATCC 700720).